A 450-amino-acid polypeptide reads, in one-letter code: MPGIVTRFAPSPTGFLHIGGARTALFNWLYAQRHGGQFLLRIEDTDRKRSTQEAIDAIIDGLKWLGISYDGEIVYQSKRIDRHIEVANLLVEKGRAYHCYCPENEVAEKKIRAREEGKIYKHKCTHSTSNAEPVVRFKVPDSEDIVVDDKIYGQVTISSDQLDDIVILRSDNTPTYIFAVVVDDHDAGITDIIRGSDHLTNTFKQLLIYQALDFDVPRFAHVPLIHGEDGNKLSKRHGATSVCDYEKMGILPQAMRNYLLRLGWSHGNDEIISDEQAIEWFNLESIGRSPARLDFKKLEHLNNHYISNMSNEDILTLMLRENTLTDKKKGYLLQGLTELKKRANYLTELLDLAKFYIQVDLSEEAQQIVKSNLNVIKLLASFLSSVGSEDWNKNFLSSQIKEFSKLHNIKMSDIYHSLRAPITGIMDAPGIIDIMVILGKDECIKRLQAI.

The short motif at 10–20 is the 'HIGH' region element; sequence PSPTGFLHIGG. The 'KMSKS' region motif lies at 232-236; it reads KLSKR. ATP is bound at residue Lys-235.

This sequence belongs to the class-I aminoacyl-tRNA synthetase family. Glutamate--tRNA ligase type 1 subfamily. Monomer.

It localises to the cytoplasm. The catalysed reaction is tRNA(Glu) + L-glutamate + ATP = L-glutamyl-tRNA(Glu) + AMP + diphosphate. Functionally, catalyzes the attachment of glutamate to tRNA(Glu) in a two-step reaction: glutamate is first activated by ATP to form Glu-AMP and then transferred to the acceptor end of tRNA(Glu). The polypeptide is Glutamate--tRNA ligase 2 (Wolbachia pipientis subsp. Culex pipiens (strain wPip)).